Here is a 364-residue protein sequence, read N- to C-terminus: tRNA/tmRNA (uracil-C(5))-methyltransferase (364 aa).

Residues Gln186, Tyr214, Asn219, Glu235, and Asp295 each contribute to the S-adenosyl-L-methionine site. The active-site Nucleophile is the Cys320. The active-site Proton acceptor is Glu354.

The protein belongs to the class I-like SAM-binding methyltransferase superfamily. RNA M5U methyltransferase family. TrmA subfamily.

The catalysed reaction is uridine(54) in tRNA + S-adenosyl-L-methionine = 5-methyluridine(54) in tRNA + S-adenosyl-L-homocysteine + H(+). The enzyme catalyses uridine(341) in tmRNA + S-adenosyl-L-methionine = 5-methyluridine(341) in tmRNA + S-adenosyl-L-homocysteine + H(+). In terms of biological role, dual-specificity methyltransferase that catalyzes the formation of 5-methyluridine at position 54 (m5U54) in all tRNAs, and that of position 341 (m5U341) in tmRNA (transfer-mRNA). The protein is tRNA/tmRNA (uracil-C(5))-methyltransferase of Azoarcus sp. (strain BH72).